The sequence spans 751 residues: Dual specificity tyrosine-phosphorylation-regulated kinase 1A (751 aa).

Residues 59-68 (YNDQIQQPLP) are compositionally biased toward polar residues. Disordered stretches follow at residues 59 to 81 (YNDQ…RDPA) and 104 to 129 (YAKK…KVYN). The Bipartite nuclear localization signal motif lies at 109–126 (RRHQQGQGDDSSHKKERK). A Protein kinase domain is found at 151–471 (YEIDSLIGKG…PYYALQHSFF (321 aa)). ATP contacts are provided by residues 157 to 165 (IGKGSFGQV), lysine 180, and 230 to 233 (FEML). The active-site Proton acceptor is aspartate 279. Residues 477–493 (EGTNTSNSVSTSPAMEQ) are compositionally biased toward polar residues. 3 disordered regions span residues 477–532 (EGTN…HSGG), 580–667 (HVPS…GNQA), and 730–751 (GMDR…VASS). Low complexity predominate over residues 494 to 517 (SQSSGTTSSTSSSSGGSSGTSNSG). Residues 585 to 613 (QQNVPHHHGNGSHHHHHHHHHHHGQHVLS) are histidine-rich domain (HRD). The span at 589 to 609 (PHHHGNGSHHHHHHHHHHHGQ) shows a compositional bias: basic residues. Over residues 611-622 (VLSNRTRTRIYN) the composition is skewed to polar residues. Composition is skewed to low complexity over residues 623 to 633 (SPSTSSSTQDS) and 642 to 660 (SMTS…SSST). Residues 742–751 (CVQQSPVASS) are compositionally biased toward polar residues.

Belongs to the protein kinase superfamily. CMGC Ser/Thr protein kinase family. MNB/DYRK subfamily. In terms of processing, autophosphorylated on tyrosine residues.

The protein resides in the nucleus. It is found in the nucleus speckle. It catalyses the reaction L-seryl-[protein] + ATP = O-phospho-L-seryl-[protein] + ADP + H(+). It carries out the reaction L-threonyl-[protein] + ATP = O-phospho-L-threonyl-[protein] + ADP + H(+). The enzyme catalyses L-tyrosyl-[protein] + ATP = O-phospho-L-tyrosyl-[protein] + ADP + H(+). The catalysed reaction is [DNA-directed RNA polymerase] + ATP = phospho-[DNA-directed RNA polymerase] + ADP + H(+). Dual-specificity kinase which possesses both serine/threonine and tyrosine kinase activities. Exhibits a substrate preference for proline at position P+1 and arginine at position P-3. Plays an important role in double-strand breaks (DSBs) repair following DNA damage. Mechanistically, phosphorylates RNF169 and increases its ability to block accumulation of TP53BP1 at the DSB sites thereby promoting homologous recombination repair (HRR). Also acts as a positive regulator of transcription by acting as a CTD kinase that mediates phosphorylation of the CTD (C-terminal domain) of the large subunit of RNA polymerase II (RNAP II) POLR2A. Modulates alternative splicing by phosphorylating the splice factor SRSF6. Phosphorylates SEPTIN4, SEPTIN5 and SF3B1. This is Dual specificity tyrosine-phosphorylation-regulated kinase 1A from Xenopus tropicalis (Western clawed frog).